A 416-amino-acid polypeptide reads, in one-letter code: MTNLEVMGKAARQAAFELSQLSAGDKNYALQMIAEQLESQQQQILAANARDIDEARINGLNDAIIDRLLLTPERLRGIANDVRHVISLADPVGKLIDGGILDSGLKLERIRVPVGVIGTIYEARPNVTIDVASLCLKTGNAVILRGGKETRHSNRILVEVVQNALEKAGLPKTAVQAITDPDRALVMELLKLDRYVDMIIPRGGAGLHALCKQHATIPVIIGGIGVCHTFVEQSADQNRAISVIKNAKTQRPSTCNTLETLLIQESIAHEFLPKLAAELPVKYYADKTAYSILHHAGAEVLAVTEDDLRKEWLCTNLNVVIVQDIEAAVAHIREYGSQHSEAILTESLQLARRFVAQVDSAAVYVNASTRFTDGGQFGLGAEVAVSTQKLHARGPMGLEALTTYKWVATGDYTVRS.

Belongs to the gamma-glutamyl phosphate reductase family.

It localises to the cytoplasm. The catalysed reaction is L-glutamate 5-semialdehyde + phosphate + NADP(+) = L-glutamyl 5-phosphate + NADPH + H(+). Its pathway is amino-acid biosynthesis; L-proline biosynthesis; L-glutamate 5-semialdehyde from L-glutamate: step 2/2. Catalyzes the NADPH-dependent reduction of L-glutamate 5-phosphate into L-glutamate 5-semialdehyde and phosphate. The product spontaneously undergoes cyclization to form 1-pyrroline-5-carboxylate. In Actinobacillus succinogenes (strain ATCC 55618 / DSM 22257 / CCUG 43843 / 130Z), this protein is Gamma-glutamyl phosphate reductase.